Consider the following 41-residue polypeptide: Large ribosomal subunit protein bL36 (41 aa).

The protein belongs to the bacterial ribosomal protein bL36 family.

In Gluconacetobacter diazotrophicus (strain ATCC 49037 / DSM 5601 / CCUG 37298 / CIP 103539 / LMG 7603 / PAl5), this protein is Large ribosomal subunit protein bL36.